A 338-amino-acid chain; its full sequence is Solute carrier family 35 member G5 (338 aa).

The disordered stretch occupies residues 1–21; that stretch reads MAGSHPYFNLPDSTHPSPPSA. Helical transmembrane passes span 37–57, 67–87, 105–125, 160–180, 190–210, 221–241, 250–270, 281–301, and 305–325; these read TNGL…VGPL, LPSL…ALPL, CFCA…VQVV, CGLL…LWTL, ALGY…LLVY, TVAF…LFVL, LLSW…FTCV, LVCA…YYVL, and VAPF…IITA. The EamA 1 domain maps to 49-174; that stretch reads LPAGFVGPLS…SILGLIIIVG (126 aa). The region spanning 272-325 is the EamA 2 domain; it reads YAVTKAHPALVCAVLHSEVVVALILQYYVLHETVAPFDITGAGIVLGSIAIITA.

It belongs to the SLC35G solute transporter family.

The protein resides in the membrane. This chain is Solute carrier family 35 member G5 (SLC35G5), found in Pan paniscus (Pygmy chimpanzee).